Here is a 90-residue protein sequence, read N- to C-terminus: Small ribosomal subunit protein uS17 (90 aa).

The protein belongs to the universal ribosomal protein uS17 family. Part of the 30S ribosomal subunit.

In terms of biological role, one of the primary rRNA binding proteins, it binds specifically to the 5'-end of 16S ribosomal RNA. This is Small ribosomal subunit protein uS17 from Burkholderia thailandensis (strain ATCC 700388 / DSM 13276 / CCUG 48851 / CIP 106301 / E264).